The sequence spans 120 residues: Methylglyoxal synthase (120 aa).

The MGS-like domain occupies methionine 1 to leucine 120. Residues histidine 8, lysine 12, and serine 54–glycine 55 contribute to the substrate site. Residue aspartate 60 is the Proton donor/acceptor of the active site. Position 87 (histidine 87) interacts with substrate.

This sequence belongs to the methylglyoxal synthase family.

The catalysed reaction is dihydroxyacetone phosphate = methylglyoxal + phosphate. Functionally, catalyzes the formation of methylglyoxal from dihydroxyacetone phosphate. This chain is Methylglyoxal synthase, found in Natranaerobius thermophilus (strain ATCC BAA-1301 / DSM 18059 / JW/NM-WN-LF).